The chain runs to 387 residues: 1-deoxy-D-xylulose 5-phosphate reductoisomerase (387 aa).

NADPH is bound by residues threonine 10, glycine 11, serine 12, valine 13, asparagine 38, and asparagine 119. Lysine 120 contacts 1-deoxy-D-xylulose 5-phosphate. Glutamate 121 serves as a coordination point for NADPH. Aspartate 145 serves as a coordination point for Mn(2+). Serine 146, glutamate 147, serine 170, and histidine 193 together coordinate 1-deoxy-D-xylulose 5-phosphate. Glutamate 147 serves as a coordination point for Mn(2+). Glycine 199 contacts NADPH. Residues serine 206, asparagine 211, lysine 212, and glutamate 215 each coordinate 1-deoxy-D-xylulose 5-phosphate. Position 215 (glutamate 215) interacts with Mn(2+).

This sequence belongs to the DXR family. Mg(2+) is required as a cofactor. The cofactor is Mn(2+).

It carries out the reaction 2-C-methyl-D-erythritol 4-phosphate + NADP(+) = 1-deoxy-D-xylulose 5-phosphate + NADPH + H(+). It functions in the pathway isoprenoid biosynthesis; isopentenyl diphosphate biosynthesis via DXP pathway; isopentenyl diphosphate from 1-deoxy-D-xylulose 5-phosphate: step 1/6. Its function is as follows. Catalyzes the NADPH-dependent rearrangement and reduction of 1-deoxy-D-xylulose-5-phosphate (DXP) to 2-C-methyl-D-erythritol 4-phosphate (MEP). This is 1-deoxy-D-xylulose 5-phosphate reductoisomerase from Wolbachia pipientis wMel.